The sequence spans 405 residues: Probable tRNA sulfurtransferase (405 aa).

The THUMP domain occupies 60–165 (EGVIERLRHV…QDAIYLTNQV (106 aa)). Residues 183–184 (ML), 208–209 (HF), Arg-265, Gly-287, and Gln-296 each bind ATP.

The protein belongs to the ThiI family.

It is found in the cytoplasm. It carries out the reaction [ThiI sulfur-carrier protein]-S-sulfanyl-L-cysteine + a uridine in tRNA + 2 reduced [2Fe-2S]-[ferredoxin] + ATP + H(+) = [ThiI sulfur-carrier protein]-L-cysteine + a 4-thiouridine in tRNA + 2 oxidized [2Fe-2S]-[ferredoxin] + AMP + diphosphate. The catalysed reaction is [ThiS sulfur-carrier protein]-C-terminal Gly-Gly-AMP + S-sulfanyl-L-cysteinyl-[cysteine desulfurase] + AH2 = [ThiS sulfur-carrier protein]-C-terminal-Gly-aminoethanethioate + L-cysteinyl-[cysteine desulfurase] + A + AMP + 2 H(+). It functions in the pathway cofactor biosynthesis; thiamine diphosphate biosynthesis. Catalyzes the ATP-dependent transfer of a sulfur to tRNA to produce 4-thiouridine in position 8 of tRNAs, which functions as a near-UV photosensor. Also catalyzes the transfer of sulfur to the sulfur carrier protein ThiS, forming ThiS-thiocarboxylate. This is a step in the synthesis of thiazole, in the thiamine biosynthesis pathway. The sulfur is donated as persulfide by IscS. This Latilactobacillus sakei subsp. sakei (strain 23K) (Lactobacillus sakei subsp. sakei) protein is Probable tRNA sulfurtransferase.